Consider the following 196-residue polypeptide: Peptidyl-tRNA hydrolase (196 aa).

Tyr-14 is a binding site for tRNA. His-19 (proton acceptor) is an active-site residue. Positions 64, 66, and 112 each coordinate tRNA.

The protein belongs to the PTH family. As to quaternary structure, monomer.

It is found in the cytoplasm. The catalysed reaction is an N-acyl-L-alpha-aminoacyl-tRNA + H2O = an N-acyl-L-amino acid + a tRNA + H(+). In terms of biological role, hydrolyzes ribosome-free peptidyl-tRNAs (with 1 or more amino acids incorporated), which drop off the ribosome during protein synthesis, or as a result of ribosome stalling. Its function is as follows. Catalyzes the release of premature peptidyl moieties from peptidyl-tRNA molecules trapped in stalled 50S ribosomal subunits, and thus maintains levels of free tRNAs and 50S ribosomes. This Solibacter usitatus (strain Ellin6076) protein is Peptidyl-tRNA hydrolase.